The primary structure comprises 514 residues: 1-pyrroline-5-carboxylate dehydrogenase (514 aa).

Catalysis depends on residues glutamate 286 and cysteine 320.

Belongs to the aldehyde dehydrogenase family. RocA subfamily.

It carries out the reaction L-glutamate 5-semialdehyde + NAD(+) + H2O = L-glutamate + NADH + 2 H(+). It functions in the pathway amino-acid degradation; L-proline degradation into L-glutamate; L-glutamate from L-proline: step 2/2. This Staphylococcus aureus (strain MRSA252) protein is 1-pyrroline-5-carboxylate dehydrogenase.